The following is a 316-amino-acid chain: 4-hydroxy-3-methylbut-2-enyl diphosphate reductase (316 aa).

A [4Fe-4S] cluster-binding site is contributed by C12. The (2E)-4-hydroxy-3-methylbut-2-enyl diphosphate site is built by H41 and H74. Positions 41 and 74 each coordinate dimethylallyl diphosphate. Isopentenyl diphosphate-binding residues include H41 and H74. C96 serves as a coordination point for [4Fe-4S] cluster. H124 contacts (2E)-4-hydroxy-3-methylbut-2-enyl diphosphate. H124 provides a ligand contact to dimethylallyl diphosphate. Residue H124 coordinates isopentenyl diphosphate. E126 serves as the catalytic Proton donor. Residue T167 coordinates (2E)-4-hydroxy-3-methylbut-2-enyl diphosphate. C197 contacts [4Fe-4S] cluster. Residues S225, S226, N227, and S269 each coordinate (2E)-4-hydroxy-3-methylbut-2-enyl diphosphate. Dimethylallyl diphosphate is bound by residues S225, S226, N227, and S269. Residues S225, S226, N227, and S269 each contribute to the isopentenyl diphosphate site.

The protein belongs to the IspH family. Homodimer. [4Fe-4S] cluster is required as a cofactor.

The catalysed reaction is isopentenyl diphosphate + 2 oxidized [2Fe-2S]-[ferredoxin] + H2O = (2E)-4-hydroxy-3-methylbut-2-enyl diphosphate + 2 reduced [2Fe-2S]-[ferredoxin] + 2 H(+). The enzyme catalyses dimethylallyl diphosphate + 2 oxidized [2Fe-2S]-[ferredoxin] + H2O = (2E)-4-hydroxy-3-methylbut-2-enyl diphosphate + 2 reduced [2Fe-2S]-[ferredoxin] + 2 H(+). It functions in the pathway isoprenoid biosynthesis; dimethylallyl diphosphate biosynthesis; dimethylallyl diphosphate from (2E)-4-hydroxy-3-methylbutenyl diphosphate: step 1/1. Its pathway is isoprenoid biosynthesis; isopentenyl diphosphate biosynthesis via DXP pathway; isopentenyl diphosphate from 1-deoxy-D-xylulose 5-phosphate: step 6/6. Catalyzes the conversion of 1-hydroxy-2-methyl-2-(E)-butenyl 4-diphosphate (HMBPP) into a mixture of isopentenyl diphosphate (IPP) and dimethylallyl diphosphate (DMAPP). Acts in the terminal step of the DOXP/MEP pathway for isoprenoid precursor biosynthesis. The chain is 4-hydroxy-3-methylbut-2-enyl diphosphate reductase from Salmonella agona (strain SL483).